We begin with the raw amino-acid sequence, 219 residues long: Histone H1.4 (219 aa).

Positions 1-15 (MSETAPAAPAAPAPA) are enriched in low complexity. The segment at 1-41 (MSETAPAAPAAPAPAEKTPVKKKARKSAGAAKRKASGPPVS) is disordered. S2 is subject to N-acetylserine. S2 carries the phosphoserine modification. K17 bears the N6-acetyllysine mark. At T18 the chain carries Phosphothreonine. Over residues 20–35 (VKKKARKSAGAAKRKA) the composition is skewed to basic residues. K26 bears the N6-acetyllysine; alternate mark. The residue at position 26 (K26) is an N6-methyllysine; alternate. N6-(beta-hydroxybutyryl)lysine; alternate is present on K34. Position 34 is an N6-succinyllysine; alternate (K34). S36 carries the phosphoserine modification. The H15 domain maps to 36-109 (SGPPVSELIT…GASGSFKLNK (74 aa)). The residue at position 52 (K52) is an N6-(beta-hydroxybutyryl)lysine. Residue R54 is modified to Citrulline. K64, K85, K90, and K106 each carry N6-(beta-hydroxybutyryl)lysine. Positions 91–219 (GTLVQTKGTG…KPKKAPAKKK (129 aa)) are disordered. Over residues 119–140 (KPKKAGAAKPKKPAGAAKKPKK) the composition is skewed to basic residues. Position 146 is a phosphothreonine (T146). Composition is skewed to basic residues over residues 149-160 (KGAKKTPKKAKK) and 168-185 (KKAK…KKAP). S187 is subject to Phosphoserine. Residues 192 to 219 (KAVKPKAAKPKAAKPKTAKPKKAPAKKK) are compositionally biased toward basic residues.

The protein belongs to the histone H1/H5 family. In terms of processing, H1 histones are progressively phosphorylated during the cell cycle, becoming maximally phosphorylated during late G2 phase and M phase, and being dephosphorylated sharply thereafter. Acetylated at Lys-26. Deacetylated at Lys-26 by SIRT1. Post-translationally, citrullination at Arg-54 (H1R54ci) by PADI4 takes place within the DNA-binding site of H1 and results in its displacement from chromatin and global chromatin decondensation, thereby promoting pluripotency and stem cell maintenance.

The protein resides in the nucleus. Its subcellular location is the chromosome. In terms of biological role, histone H1 protein binds to linker DNA between nucleosomes forming the macromolecular structure known as the chromatin fiber. Histones H1 are necessary for the condensation of nucleosome chains into higher-order structured fibers. Also acts as a regulator of individual gene transcription through chromatin remodeling, nucleosome spacing and DNA methylation. The chain is Histone H1.4 from Oryctolagus cuniculus (Rabbit).